The following is a 539-amino-acid chain: GMP synthase [glutamine-hydrolyzing] (539 aa).

Positions 4–202 constitute a Glutamine amidotransferase type-1 domain; it reads KILILDFGSQ…VLQIAGAKPD (199 aa). C81 acts as the Nucleophile in catalysis. Catalysis depends on residues H176 and E178. A GMPS ATP-PPase domain is found at 203 to 395; sequence WIMSNHIEEA…LGLPPEMVYR (193 aa). 230–236 contributes to the ATP binding site; the sequence is SGGVDSS.

Homodimer.

It catalyses the reaction XMP + L-glutamine + ATP + H2O = GMP + L-glutamate + AMP + diphosphate + 2 H(+). Its pathway is purine metabolism; GMP biosynthesis; GMP from XMP (L-Gln route): step 1/1. Its function is as follows. Catalyzes the synthesis of GMP from XMP. This Burkholderia ambifaria (strain ATCC BAA-244 / DSM 16087 / CCUG 44356 / LMG 19182 / AMMD) (Burkholderia cepacia (strain AMMD)) protein is GMP synthase [glutamine-hydrolyzing].